Consider the following 1441-residue polypeptide: Histone-lysine N-methyltransferase SETD5 (1441 aa).

The disordered stretch occupies residues 1-28 (MSIAIPLGVTTPDTSYSDMAAGSDPESV). Leu-70 bears the Phosphothreonine mark. Ser-72 and Val-74 each carry phosphoserine. The interval 156 to 202 (TPTSITLTVRRTKPKKRKKSPEKGRAAPKTKKIKNSPSEAQNLDENT) is disordered. Basic residues predominate over residues 165-189 (RRTKPKKRKKSPEKGRAAPKTKKIK). Positions 190 to 202 (NSPSEAQNLDENT) are enriched in polar residues. Positions 269-390 (MQLQLGRVTR…KDAEVTIAFD (122 aa)) constitute an SET domain. Disordered stretches follow at residues 417 to 683 (NPNA…TVIS) and 793 to 816 (MTQTSSVPQETRTQHLYQSNETSN). Acidic residues-rich tracts occupy residues 450-461 (LEQQNEVPEENP) and 479-501 (EEVDNPEEKPEEEEKEEATDDQE). Low complexity-rich tracts occupy residues 539 to 552 (SSSDIEITTSSSEI) and 561 to 572 (AAPESEVSSPVS). A compositionally biased stretch (polar residues) spans 575 to 588 (AIPSTPQSTGVNTR). The segment covering 611-621 (SRPRPKSRISR) has biased composition (basic residues). The span at 635–650 (QAIAQQAELSQAALEE) shows a compositional bias: low complexity. The span at 652 to 683 (GSNNSVTPPEAGNTDSSGENRQLTGSDPTVIS) shows a compositional bias: polar residues. A phosphoserine mark is found at Ser-829 and Ser-852. Disordered stretches follow at residues 849–883 (QPLSPVTPPPPSSGSKSPQLTTPGQTHPGEEECRN), 1036–1228 (DLSR…SKGA), and 1243–1441 (CDSP…TGLS). Thr-855 is subject to Phosphothreonine. The segment covering 1062–1076 (QRKKVSLLEYRKRKQ) has biased composition (basic residues). Low complexity predominate over residues 1087-1107 (DSSQSKSKSSGAGQGSSNSVS). Residues 1144-1163 (PSDSRGTSSSHCRPQENISS) show a composition bias toward polar residues. Ser-1197 is modified (phosphoserine). The segment covering 1250–1259 (SQSLLQQSSS) has biased composition (low complexity). The span at 1265-1275 (PTQSPGYSYRT) shows a compositional bias: polar residues. Residues 1284–1300 (PSHGSSESSLSSTSYPS) are compositionally biased toward low complexity. The span at 1319-1333 (YYSSQPHSGNSTGSN) shows a compositional bias: polar residues. Residues 1335 to 1372 (PRRSCSSSAASPTPQGPSDSPTSDSVSQSSTGTLSSTS) show a composition bias toward low complexity. Composition is skewed to polar residues over residues 1373 to 1382 (FPQNSRSSLP), 1389 to 1412 (SLPNAGQSAAYQASRVSAVSNSQH), and 1429 to 1441 (LQGSGVKTQTGLS).

As to quaternary structure, interacts with components of the PAF1 complex (PAF1C) such as LEO1, CTR9 and CDC73. Interacts with NCOR1. Interacts with HDAC3. In terms of tissue distribution, ubiquitously expressed.

It is found in the nucleus. Its subcellular location is the chromosome. The catalysed reaction is L-lysyl(9)-[histone H3] + S-adenosyl-L-methionine = N(6)-methyl-L-lysyl(9)-[histone H3] + S-adenosyl-L-homocysteine + H(+). The enzyme catalyses L-lysyl(36)-[histone H3] + 3 S-adenosyl-L-methionine = N(6),N(6),N(6)-trimethyl-L-lysyl(36)-[histone H3] + 3 S-adenosyl-L-homocysteine + 3 H(+). Chromatin regulator required for brain development: acts as a regulator of RNA elongation rate, thereby regulating neural stem cell (NSC) proliferation and synaptic transmission. May act by mediating trimethylation of 'Lys-36' of histone H3 (H3K36me3), which is essential to allow on-time RNA elongation dynamics. Also monomethylates 'Lys-9' of histone H3 (H3K9me1) in vitro. The relevance of histone methyltransferase activity is however subject to discussion. In Mus musculus (Mouse), this protein is Histone-lysine N-methyltransferase SETD5.